The following is a 338-amino-acid chain: Heat-inducible transcription repressor HrcA (338 aa).

It belongs to the HrcA family.

Its function is as follows. Negative regulator of class I heat shock genes (grpE-dnaK-dnaJ and groELS operons). Prevents heat-shock induction of these operons. The polypeptide is Heat-inducible transcription repressor HrcA (Bacillus mycoides (strain KBAB4) (Bacillus weihenstephanensis)).